The chain runs to 110 residues: Membrane-associated protein slr1513 (110 aa).

The protein localises to the cellular thylakoid membrane. The protein resides in the cell membrane. In Synechocystis sp. (strain ATCC 27184 / PCC 6803 / Kazusa), this protein is Membrane-associated protein slr1513.